We begin with the raw amino-acid sequence, 564 residues long: Aspyridones efflux protein (564 aa).

The span at 1–17 shows a compositional bias: low complexity; that stretch reads MHPDQADTAAMQQQTTT. Residues 1-49 are disordered; the sequence is MHPDQADTAAMQQQTTTECSDRSRPEKAEEGHAREHTVTRTCSREPEQT. Over residues 19–47 the composition is skewed to basic and acidic residues; the sequence is CSDRSRPEKAEEGHAREHTVTRTCSREPE. Helical transmembrane passes span 66-86, 127-147, 158-178, 185-205, 216-236, 260-280, 287-307, 335-355, 368-388, and 392-412; these read AICL…TAIP, WTFL…ATAP, IAGC…THSV, LFMA…PPLG, WCFW…VFLF, VGTL…QWGG, SGIV…FGIV, FALG…FQGV, LPML…VTII, and APFM…LLLF. N415 is a glycosylation site (N-linked (GlcNAc...) asparagine). The next 2 helical transmembrane spans lie at 416–436 and 454–474; these read VTAA…GFGW and IATA…VSVA. N524 carries an N-linked (GlcNAc...) asparagine glycan. Residues 528–548 form a helical membrane-spanning segment; the sequence is LSAFFVATIMAIMSLVGCTFV.

Belongs to the major facilitator superfamily. TCR/Tet family.

The protein localises to the cell membrane. Efflux pump that may be involved in the secretion of leporins. The sequence is that of Aspyridones efflux protein (TP) from Neocamarosporium betae (Beet black rot fungus).